A 540-amino-acid polypeptide reads, in one-letter code: Chaperonin GroEL 2 (540 aa).

Residues 30 to 33 (TLGP), Lys-51, 87 to 91 (DGTTT), Gly-415, 480 to 482 (NAL), and Asp-496 each bind ATP.

It belongs to the chaperonin (HSP60) family. Forms a cylinder of 14 subunits composed of two heptameric rings stacked back-to-back. Interacts with the co-chaperonin GroES.

Its subcellular location is the cytoplasm. The enzyme catalyses ATP + H2O + a folded polypeptide = ADP + phosphate + an unfolded polypeptide.. In terms of biological role, together with its co-chaperonin GroES, plays an essential role in assisting protein folding. The GroEL-GroES system forms a nano-cage that allows encapsulation of the non-native substrate proteins and provides a physical environment optimized to promote and accelerate protein folding. This Protochlamydia amoebophila (strain UWE25) protein is Chaperonin GroEL 2.